The primary structure comprises 302 residues: Spermidine synthase (302 aa).

Met-1 carries the post-translational modification N-acetylmethionine. Residues 18-253 (EGWFRETCSL…GQIGFMLCSK (236 aa)) enclose the PABS domain. Gln-49 lines the S-adenosyl 3-(methylsulfanyl)propylamine pocket. Residue Tyr-79 participates in putrescine binding. Residues Gln-80, Asp-104, Glu-124, 155–156 (DG), and Asp-173 contribute to the S-adenosyl 3-(methylsulfanyl)propylamine site. Catalysis depends on Asp-173, which acts as the Proton acceptor. Putrescine-binding positions include 173 to 176 (DSSD) and Tyr-241.

This sequence belongs to the spermidine/spermine synthase family. In terms of assembly, homodimer or homotetramer.

The catalysed reaction is S-adenosyl 3-(methylsulfanyl)propylamine + putrescine = S-methyl-5'-thioadenosine + spermidine + H(+). It participates in amine and polyamine biosynthesis; spermidine biosynthesis; spermidine from putrescine: step 1/1. Its activity is regulated as follows. The activity is thought to be regulated mainly by the availability of decarboxylated S-adenosylmethionine. Catalyzes the production of spermidine from putrescine and decarboxylated S-adenosylmethionine (dcSAM). Has a strong preference for putrescine as substrate, and has very low activity towards 1,3-diaminopropane. Has extremely low activity towards spermidine. The chain is Spermidine synthase (SRM) from Homo sapiens (Human).